A 345-amino-acid polypeptide reads, in one-letter code: Ananain (345 aa).

A signal peptide spans 1-24 (MTSKVQLVFLFLFLCVMWASPSAA). Residues 25–122 (SCDEPSDPMM…VSFDDVDISS (98 aa)) constitute a propeptide, activation peptide. Intrachain disulfides connect Cys144/Cys184, Cys178/Cys217, and Cys273/Cys325. Cys147 is a catalytic residue. Position 147 (Cys147) interacts with E64. Residues His279 and Asn300 contribute to the active site.

In terms of tissue distribution, stem (at protein level).

The catalysed reaction is Hydrolysis of proteins with broad specificity for peptide bonds. Best reported small molecule substrate Bz-Phe-Val-Arg-|-NHMec, but broader specificity than fruit bromelain.. With respect to regulation, strongly inhibited by chicken egg-white cystatin. Inhibited by iodoacetamide and the active-site-directed inhibitor E64 (L-trans-epoxysuccinyl-leucylamide-(4-guanido)-butane). Its function is as follows. Cysteine protease. Displays a high level of diversity in substrate specificity at the P1-P1' cleavage site. A hydrophilic P1 residue is preferred, with Gln or Arg strongly preferred. Favors an Ile/Leu residue at the P2 position of substrates, with an overall higher preference for Leu. The optimal tripeptide for cleavage is Pro-Leu-Gln, with cleavage occurring after the Gln residue. Another optimal tripeptide is Val-Leu-Arg, which may imply that a hydrophobic residue at the P3 position of substrates is preferred. This chain is Ananain, found in Ananas comosus (Pineapple).